The following is a 125-amino-acid chain: Succinate dehydrogenase assembly factor 3, mitochondrial (125 aa).

A mitochondrion-targeting transit peptide spans 1–42 (MRTTNHLYRTVHRQGKPLLPPLHLYRRILRAHRTFPPAQRAL).

This sequence belongs to the complex I LYR family. SDHAF3 subfamily. Interacts with the iron-sulfur protein subunit within the SDH catalytic dimer.

The protein resides in the mitochondrion matrix. In terms of biological role, plays an essential role in the assembly of succinate dehydrogenase (SDH), an enzyme complex (also referred to as respiratory complex II) that is a component of both the tricarboxylic acid (TCA) cycle and the mitochondrial electron transport chain, and which couples the oxidation of succinate to fumarate with the reduction of ubiquinone (coenzyme Q) to ubiquinol. Promotes maturation of the iron-sulfur protein subunit of the SDH catalytic dimer, protecting it from the deleterious effects of oxidants. May act together with SDHAF1. The chain is Succinate dehydrogenase assembly factor 3, mitochondrial from Eremothecium gossypii (strain ATCC 10895 / CBS 109.51 / FGSC 9923 / NRRL Y-1056) (Yeast).